Reading from the N-terminus, the 186-residue chain is FMN-dependent NADH:quinone oxidoreductase 1 (186 aa).

Residues 15 to 17 (SVS) and 81 to 84 (MYNF) contribute to the FMN site.

This sequence belongs to the azoreductase type 1 family. In terms of assembly, homodimer. The cofactor is FMN.

It carries out the reaction 2 a quinone + NADH + H(+) = 2 a 1,4-benzosemiquinone + NAD(+). It catalyses the reaction N,N-dimethyl-1,4-phenylenediamine + anthranilate + 2 NAD(+) = 2-(4-dimethylaminophenyl)diazenylbenzoate + 2 NADH + 2 H(+). Functionally, quinone reductase that provides resistance to thiol-specific stress caused by electrophilic quinones. In terms of biological role, also exhibits azoreductase activity. Catalyzes the reductive cleavage of the azo bond in aromatic azo compounds to the corresponding amines. The sequence is that of FMN-dependent NADH:quinone oxidoreductase 1 from Idiomarina loihiensis (strain ATCC BAA-735 / DSM 15497 / L2-TR).